The chain runs to 426 residues: Anhydromevalonate phosphate decarboxylase (426 aa).

Residues Asn148 and Glu211 each coordinate Mn(2+). The Proton acceptor role is filled by Asp255.

This sequence belongs to the UbiD family. Requires prenylated FMN as cofactor. Mn(2+) serves as cofactor.

It catalyses the reaction (2E)-3-methyl-5-phosphooxypent-2-enoate + H(+) = isopentenyl phosphate + CO2. Its pathway is isoprenoid biosynthesis; isopentenyl diphosphate biosynthesis via mevalonate pathway. Its function is as follows. Catalyzes the conversion of trans-anhydromevalonate 5-phosphate (tAHMP) into isopentenyl phosphate. Involved in the archaeal mevalonate (MVA) pathway, which provides fundamental precursors for isoprenoid biosynthesis, such as isopentenyl diphosphate (IPP) and dimethylallyl diphosphate (DMAPP). The polypeptide is Anhydromevalonate phosphate decarboxylase (Archaeoglobus fulgidus (strain ATCC 49558 / DSM 4304 / JCM 9628 / NBRC 100126 / VC-16)).